Here is a 151-residue protein sequence, read N- to C-terminus: Putative pre-16S rRNA nuclease (151 aa).

The protein belongs to the YqgF nuclease family.

Its subcellular location is the cytoplasm. In terms of biological role, could be a nuclease involved in processing of the 5'-end of pre-16S rRNA. This Methylococcus capsulatus (strain ATCC 33009 / NCIMB 11132 / Bath) protein is Putative pre-16S rRNA nuclease.